The primary structure comprises 470 residues: Rhamnulokinase (470 aa).

Residue 12–16 participates in ATP binding; it reads ASSGR. Substrate-binding positions include A80 and 237–239; that span reads HDT. The Proton acceptor role is filled by D238. T259 contacts ATP. A substrate-binding site is contributed by N296. Q304 serves as a coordination point for ATP. A disulfide bond links C353 and C370. Residue G402 participates in ATP binding.

It belongs to the rhamnulokinase family. It depends on Mg(2+) as a cofactor.

It catalyses the reaction L-rhamnulose + ATP = L-rhamnulose 1-phosphate + ADP + H(+). It participates in carbohydrate degradation; L-rhamnose degradation; glycerone phosphate from L-rhamnose: step 2/3. Functionally, involved in the catabolism of L-rhamnose (6-deoxy-L-mannose). Catalyzes the transfer of the gamma-phosphate group from ATP to the 1-hydroxyl group of L-rhamnulose to yield L-rhamnulose 1-phosphate. This chain is Rhamnulokinase, found in Oceanobacillus iheyensis (strain DSM 14371 / CIP 107618 / JCM 11309 / KCTC 3954 / HTE831).